The sequence spans 829 residues: Receptor-type tyrosine-protein phosphatase alpha (829 aa).

The signal sequence occupies residues 1-19 (MDSWFILVLFGSGLIHVSA). At 20–142 (NNATTVSPSL…ETFPPADETP (123 aa)) the chain is on the extracellular side. N-linked (GlcNAc...) asparagine glycans are attached at residues asparagine 21, asparagine 47, asparagine 51, asparagine 68, asparagine 80, asparagine 86, asparagine 104, and asparagine 124. The disordered stretch occupies residues 79–106 (VNSSHSDNGTRRAASTESGGTTISPNGS). Residues 143–166 (IIAVMVALSSLLVIVFIIIVLYML) traverse the membrane as a helical segment. Topologically, residues 167-829 (RFKKYKQAGS…DAFSDYANFK (663 aa)) are cytoplasmic. Residues serine 202 and serine 204 each carry the phosphoserine modification. Tyrosine-protein phosphatase domains are found at residues 232-528 (FREE…LLEH) and 560-818 (LEEE…VQEY). Residues aspartate 437, 469 to 475 (CSAGVGR), and glutamine 513 each bind substrate. Cysteine 469 acts as the Phosphocysteine intermediate in catalysis. Cysteine 759 functions as the Phosphocysteine intermediate in the catalytic mechanism. Tyrosine 825 is subject to Phosphotyrosine.

This sequence belongs to the protein-tyrosine phosphatase family. Receptor class 4 subfamily. As to quaternary structure, part of a complex comprised of PTPRA, BCAR1, BCAR3 (via SH2 domain), and SRC. Within the complex, interacts (when phosphorylated on Tyr-825) with BCAR3 (via SH2 domain). Interacts with GRB2. In terms of processing, integrin binding to extracellular matrix induces phosphorylation at Tyr-825 which induces PTPRA localization and recruitment of BCAR3, BCAR1 and CRK to focal adhesions. As to expression, widely expressed. Highest expression in brain and kidney.

The protein resides in the cell membrane. It localises to the cell junction. Its subcellular location is the focal adhesion. It carries out the reaction O-phospho-L-tyrosyl-[protein] + H2O = L-tyrosyl-[protein] + phosphate. Its function is as follows. Tyrosine protein phosphatase which is involved in integrin-mediated focal adhesion formation. Following integrin engagement, specifically recruits BCAR3, BCAR1 and CRK to focal adhesions thereby promoting SRC-mediated phosphorylation of BRAC1 and the subsequent activation of PAK and small GTPase RAC1 and CDC42. The protein is Receptor-type tyrosine-protein phosphatase alpha (Ptpra) of Mus musculus (Mouse).